A 409-amino-acid chain; its full sequence is Ligand-gated cation channel ZACN (409 aa).

The signal sequence occupies residues 1-18 (MAPRLLLLLLAFLRLGTT). The Extracellular segment spans residues 19–233 (GPLVQGRGFR…LRLQNTALKA (215 aa)). N-linked (GlcNAc...) asparagine glycosylation is found at asparagine 55 and asparagine 99. A disulfide bond links cysteine 157 and cysteine 171. Residues 234–254 (IIALLVPGEALLLADMCGGLL) traverse the membrane as a helical segment. Topologically, residues 255-265 (PLRATERIAYK) are cytoplasmic. Residues 266–286 (VTLLLGYLVFHSSLVQALPSS) traverse the membrane as a helical segment. At 287-296 (SSCNPLLIYY) the chain is on the extracellular side. The helical transmembrane segment at 297–317 (FTVLLLLLFISTMETVLLAAL) threads the bilayer. At 318 to 365 (QARGHLSARSSPIPTPRGEQQDHGDLGPHPEEAPGVKESRSWAEAADH) the chain is on the cytoplasmic side. The interval 325–354 (ARSSPIPTPRGEQQDHGDLGPHPEEAPGVK) is disordered. A compositionally biased stretch (basic and acidic residues) spans 336-354 (EQQDHGDLGPHPEEAPGVK). Residues 366–386 (IFFLVYVVGVVCSQFFFIGFW) form a helical membrane-spanning segment. Over 387 to 409 (MWATCKSDPAPGEAIPHGGQPRL) the chain is Extracellular.

The protein belongs to the ligand-gated ion channel (TC 1.A.9) family. Glycosylated.

It localises to the cell membrane. It catalyses the reaction Na(+)(in) = Na(+)(out). The catalysed reaction is K(+)(in) = K(+)(out). Ligand-gated cation channel that allows the movement of sodium and potassium monoatomic cations across cell membranes when activated by zinc (Zn2+), copper (Cu2+), and changes in pH. Could also transport cesium. In Canis lupus familiaris (Dog), this protein is Ligand-gated cation channel ZACN.